A 566-amino-acid polypeptide reads, in one-letter code: MAAKSQKTLVLLANLIKFPPLKAFSLLNSPNFHEFQHTHESISILLRLLLSGNLFSHAQSLLLQVISGKIHSQFFTSSSLLHYLTESETSKTKFRLYEVIINSYVQSQSLNLSISYFNEMVDNGFVPGSNCFNYLLTFVVGSSSFNQWWSFFNENKSKVVLDVYSFGILIKGCCEAGEIEKSFDLLIELTEFGFSPNVVIYTTLIDGCCKKGEIEKAKDLFFEMGKLGLVANERTYTVLINGLFKNGVKKQGFEMYEKMQEDGVFPNLYTYNCVMNQLCKDGRTKDAFQVFDEMRERGVSCNIVTYNTLIGGLCREMKLNEANKVVDQMKSDGINPNLITYNTLIDGFCGVGKLGKALSLCRDLKSRGLSPSLVTYNILVSGFCRKGDTSGAAKMVKEMEERGIKPSKVTYTILIDTFARSDNMEKAIQLRLSMEELGLVPDVHTYSVLIHGFCIKGQMNEASRLFKSMVEKNCEPNEVIYNTMILGYCKEGSSYRALKLLKEMEEKELAPNVASYRYMIEVLCKERKSKEAERLVEKMIDSGIDPSTSILSLISRAKNDSHVSSK.

13 PPR repeats span residues 93 to 127 (KFRL…GFVP), 128 to 158 (GSNC…NKSK), 162 to 196 (DVYS…GFSP), 197 to 231 (NVVI…GLVA), 232 to 266 (NERT…GVFP), 267 to 301 (NLYT…GVSC), 302 to 336 (NIVT…GINP), 337 to 371 (NLIT…GLSP), 372 to 406 (SLVT…GIKP), 407 to 441 (SKVT…GLVP), 442 to 476 (DVHT…NCEP), 477 to 511 (NEVI…ELAP), and 512 to 546 (NVAS…GIDP).

This sequence belongs to the PPR family. P subfamily.

The protein is Pentatricopeptide repeat-containing protein At4g11690 of Arabidopsis thaliana (Mouse-ear cress).